A 439-amino-acid chain; its full sequence is tRNA-2-methylthio-N(6)-dimethylallyladenosine synthase (439 aa).

One can recognise an MTTase N-terminal domain in the interval Lys-2–Gln-119. Residues Cys-11, Cys-48, Cys-82, Cys-156, Cys-160, and Cys-163 each contribute to the [4Fe-4S] cluster site. The region spanning Arg-142 to Glu-374 is the Radical SAM core domain. One can recognise a TRAM domain in the interval Gln-377–Cys-439.

It belongs to the methylthiotransferase family. MiaB subfamily. In terms of assembly, monomer. [4Fe-4S] cluster serves as cofactor.

Its subcellular location is the cytoplasm. The catalysed reaction is N(6)-dimethylallyladenosine(37) in tRNA + (sulfur carrier)-SH + AH2 + 2 S-adenosyl-L-methionine = 2-methylsulfanyl-N(6)-dimethylallyladenosine(37) in tRNA + (sulfur carrier)-H + 5'-deoxyadenosine + L-methionine + A + S-adenosyl-L-homocysteine + 2 H(+). Functionally, catalyzes the methylthiolation of N6-(dimethylallyl)adenosine (i(6)A), leading to the formation of 2-methylthio-N6-(dimethylallyl)adenosine (ms(2)i(6)A) at position 37 in tRNAs that read codons beginning with uridine. The chain is tRNA-2-methylthio-N(6)-dimethylallyladenosine synthase from Coxiella burnetii (strain Dugway 5J108-111).